The primary structure comprises 90 residues: Small ribosomal subunit protein uS19 (90 aa).

The protein belongs to the universal ribosomal protein uS19 family.

In terms of biological role, protein S19 forms a complex with S13 that binds strongly to the 16S ribosomal RNA. The polypeptide is Small ribosomal subunit protein uS19 (Hydrogenovibrio crunogenus (strain DSM 25203 / XCL-2) (Thiomicrospira crunogena)).